The primary structure comprises 286 residues: 4-diphosphocytidyl-2-C-methyl-D-erythritol kinase (286 aa).

The active site involves Lys-11. An ATP-binding site is contributed by 93-103; that stretch reads PFGAGLGGGSS. Asp-135 is a catalytic residue.

Belongs to the GHMP kinase family. IspE subfamily.

The enzyme catalyses 4-CDP-2-C-methyl-D-erythritol + ATP = 4-CDP-2-C-methyl-D-erythritol 2-phosphate + ADP + H(+). It functions in the pathway isoprenoid biosynthesis; isopentenyl diphosphate biosynthesis via DXP pathway; isopentenyl diphosphate from 1-deoxy-D-xylulose 5-phosphate: step 3/6. In terms of biological role, catalyzes the phosphorylation of the position 2 hydroxy group of 4-diphosphocytidyl-2C-methyl-D-erythritol. The sequence is that of 4-diphosphocytidyl-2-C-methyl-D-erythritol kinase from Chlorobaculum parvum (strain DSM 263 / NCIMB 8327) (Chlorobium vibrioforme subsp. thiosulfatophilum).